An 818-amino-acid polypeptide reads, in one-letter code: Fibrous sheath CABYR-binding protein (818 aa).

Residues 1–61 are disordered; sequence MEEKDESEQS…PKAALSIGNI (61 aa). Ser25, Ser57, and Ser182 each carry phosphoserine. Disordered regions lie at residues 195–727 and 773–805; these read SFSK…PFIT and LESG…NEGV. Composition is skewed to low complexity over residues 490–511, 544–560, and 697–715; these read SPPA…PAEE, EAPA…PAEE, and AELQ…VSVE. The span at 773–794 shows a compositional bias: basic and acidic residues; it reads LESGNLDDKPKSEEPLERDTIP.

Interacts with CABYR. Interacts with ROPN1 and ROPN1L; the interaction increases upon spermatozoa capacitation conditions. Phosphorylated by PKA upon spermatozoa capacitation conditions.

The protein resides in the cell projection. It is found in the cilium. It localises to the flagellum. In terms of biological role, may be involved in the later stages of fibrous sheath biogenesis and spermatozoa capacitation. Inhibits ROPN1 and ROPN1L SUMOylation. Binds calcium. In Bos taurus (Bovine), this protein is Fibrous sheath CABYR-binding protein.